The following is a 500-amino-acid chain: Probable cytosol aminopeptidase (500 aa).

Mn(2+)-binding residues include Lys-268 and Asp-273. Residue Lys-280 is part of the active site. Residues Asp-291, Asp-350, and Glu-352 each coordinate Mn(2+). Arg-354 is a catalytic residue.

This sequence belongs to the peptidase M17 family. Mn(2+) serves as cofactor.

The protein resides in the cytoplasm. It catalyses the reaction Release of an N-terminal amino acid, Xaa-|-Yaa-, in which Xaa is preferably Leu, but may be other amino acids including Pro although not Arg or Lys, and Yaa may be Pro. Amino acid amides and methyl esters are also readily hydrolyzed, but rates on arylamides are exceedingly low.. It carries out the reaction Release of an N-terminal amino acid, preferentially leucine, but not glutamic or aspartic acids.. Functionally, presumably involved in the processing and regular turnover of intracellular proteins. Catalyzes the removal of unsubstituted N-terminal amino acids from various peptides. The sequence is that of Probable cytosol aminopeptidase from Azoarcus sp. (strain BH72).